The primary structure comprises 584 residues: FAD-linked oxidoreductase OXR2 (584 aa).

The first 22 residues, 1-22 (MRSIISAFILSLNFCTQPLVRG), serve as a signal peptide directing secretion. 7 N-linked (GlcNAc...) asparagine glycosylation sites follow: N75, N97, N115, N225, N302, N321, and N507. An FAD-binding PCMH-type domain is found at 128–310 (LGMLSEKYIA…LNATFKVEPV (183 aa)).

It belongs to the oxygen-dependent FAD-linked oxidoreductase family. The cofactor is FAD.

It functions in the pathway secondary metabolite biosynthesis. Functionally, FAD-linked oxidoreductase; part of the gene cluster that mediates the biosynthesis of a tyrosine-derived cytochalasan acting as a fungal signal recognized by resistant rice plants and leads to avirulence in Pi33 resistant rice cultivars. The first step in the pathway is catalyzed by the hybrid PKS-NRPS ACE1, assisted by the enoyl reductase RAP1, that are responsible for fusion of the tyrosine precursor and the polyketide backbone. The polyketide synthase module (PKS) of ACE1 is responsible for the synthesis of the polyketide backbone and the downstream nonribosomal peptide synthetase (NRPS) amidates the carboxyl end of the polyketide with the tyrosine precursor. Because ACE1 lacks a designated enoylreductase (ER) domain, the required activity is provided the enoyl reductase RAP1. Reduction by the hydrolyase ORFZ, followed by dehydration and intra-molecular Diels-Alder cyclization by the Diels-Alderase ORF3 then yield the required isoindolone-fused macrocycle. A number of oxidative steps catalyzed by the tailoring enzymes identified within the cluster, including cytochrome P450 monooxygenases CYP1 to CYP4, the FAD-linked oxidoreductase OXR2 and the short-chain dehydrogenase/reductase OXR1, are further required to afford the final cytochalasans that confer avirulence and which have still to be identified. The monooxygenase CYP1 has been shown to be a site-selective C-18 hydroxylase whereas the function of CYP3 is the site-selective epoxidation of the C-6/C-7 olefin that is present in some intermediate compounds. Finally, SYN2 and RAP2 are not required for avirulence in Pi33 resistant rice cultivars. The chain is FAD-linked oxidoreductase OXR2 from Pyricularia oryzae (strain 70-15 / ATCC MYA-4617 / FGSC 8958) (Rice blast fungus).